We begin with the raw amino-acid sequence, 440 residues long: UDP-N-acetylmuramoylalanine--D-glutamate ligase (440 aa).

113-119 (GTNGKST) lines the ATP pocket.

This sequence belongs to the MurCDEF family.

It localises to the cytoplasm. It carries out the reaction UDP-N-acetyl-alpha-D-muramoyl-L-alanine + D-glutamate + ATP = UDP-N-acetyl-alpha-D-muramoyl-L-alanyl-D-glutamate + ADP + phosphate + H(+). Its pathway is cell wall biogenesis; peptidoglycan biosynthesis. Cell wall formation. Catalyzes the addition of glutamate to the nucleotide precursor UDP-N-acetylmuramoyl-L-alanine (UMA). The sequence is that of UDP-N-acetylmuramoylalanine--D-glutamate ligase (murD) from Buchnera aphidicola subsp. Acyrthosiphon pisum (strain APS) (Acyrthosiphon pisum symbiotic bacterium).